The chain runs to 511 residues: Maturase K (511 aa).

Belongs to the intron maturase 2 family. MatK subfamily.

The protein localises to the plastid. The protein resides in the chloroplast. In terms of biological role, usually encoded in the trnK tRNA gene intron. Probably assists in splicing its own and other chloroplast group II introns. The chain is Maturase K from Chloranthus spicatus (Chulantree).